Here is a 461-residue protein sequence, read N- to C-terminus: Kynureninase (461 aa).

Residues leucine 114, threonine 115, 142–145 (FPSD), aspartate 228, histidine 231, and tyrosine 253 each bind pyridoxal 5'-phosphate. An N6-(pyridoxal phosphate)lysine modification is found at lysine 254. Tryptophan 288 and asparagine 316 together coordinate pyridoxal 5'-phosphate.

This sequence belongs to the kynureninase family. In terms of assembly, homodimer. The cofactor is pyridoxal 5'-phosphate.

It is found in the cytoplasm. The catalysed reaction is L-kynurenine + H2O = anthranilate + L-alanine + H(+). It carries out the reaction 3-hydroxy-L-kynurenine + H2O = 3-hydroxyanthranilate + L-alanine + H(+). It functions in the pathway amino-acid degradation; L-kynurenine degradation; L-alanine and anthranilate from L-kynurenine: step 1/1. It participates in cofactor biosynthesis; NAD(+) biosynthesis; quinolinate from L-kynurenine: step 2/3. In terms of biological role, catalyzes the cleavage of L-kynurenine (L-Kyn) and L-3-hydroxykynurenine (L-3OHKyn) into anthranilic acid (AA) and 3-hydroxyanthranilic acid (3-OHAA), respectively. This Candida albicans (strain SC5314 / ATCC MYA-2876) (Yeast) protein is Kynureninase.